The following is a 79-amino-acid chain: uncharacterized protein (79 aa).

A signal peptide spans 1 to 20 (MSQLMGIITRLQSLQETAEA).

This is an uncharacterized protein from Bacillus subtilis (strain 168).